A 384-amino-acid chain; its full sequence is Carbamoyl phosphate synthase small chain (384 aa).

The CPSase stretch occupies residues 1–195 (MLPVLPPALL…LGRGHGTLAD (195 aa)). Positions 50, 247, and 249 each coordinate L-glutamine. The Glutamine amidotransferase type-1 domain occupies 199–384 (HVVAYDFGVK…RFVALMQERA (186 aa)). Catalysis depends on Cys-275, which acts as the Nucleophile. L-glutamine contacts are provided by Leu-276, Gln-279, Asn-317, Gly-319, and Phe-320. Residues His-359 and Glu-361 contribute to the active site.

Belongs to the CarA family. Composed of two chains; the small (or glutamine) chain promotes the hydrolysis of glutamine to ammonia, which is used by the large (or ammonia) chain to synthesize carbamoyl phosphate. Tetramer of heterodimers (alpha,beta)4.

It catalyses the reaction hydrogencarbonate + L-glutamine + 2 ATP + H2O = carbamoyl phosphate + L-glutamate + 2 ADP + phosphate + 2 H(+). It carries out the reaction L-glutamine + H2O = L-glutamate + NH4(+). The protein operates within amino-acid biosynthesis; L-arginine biosynthesis; carbamoyl phosphate from bicarbonate: step 1/1. It participates in pyrimidine metabolism; UMP biosynthesis via de novo pathway; (S)-dihydroorotate from bicarbonate: step 1/3. In terms of biological role, small subunit of the glutamine-dependent carbamoyl phosphate synthetase (CPSase). CPSase catalyzes the formation of carbamoyl phosphate from the ammonia moiety of glutamine, carbonate, and phosphate donated by ATP, constituting the first step of 2 biosynthetic pathways, one leading to arginine and/or urea and the other to pyrimidine nucleotides. The small subunit (glutamine amidotransferase) binds and cleaves glutamine to supply the large subunit with the substrate ammonia. In Rubrivivax gelatinosus (strain NBRC 100245 / IL144), this protein is Carbamoyl phosphate synthase small chain.